The following is a 394-amino-acid chain: Elongation factor Tu (394 aa).

The tr-type G domain maps to 10-204 (KPHVNIGTIG…AVDSYIPQPV (195 aa)). The interval 19–26 (GHVDHGKT) is G1. Position 19 to 26 (19 to 26 (GHVDHGKT)) interacts with GTP. Threonine 26 provides a ligand contact to Mg(2+). Residues 60-64 (GITIS) form a G2 region. A G3 region spans residues 81 to 84 (DCPG). Residues 81 to 85 (DCPGH) and 136 to 139 (NKID) contribute to the GTP site. The tract at residues 136-139 (NKID) is G4. The interval 174 to 176 (SAL) is G5.

The protein belongs to the TRAFAC class translation factor GTPase superfamily. Classic translation factor GTPase family. EF-Tu/EF-1A subfamily. As to quaternary structure, monomer.

The protein localises to the cytoplasm. The enzyme catalyses GTP + H2O = GDP + phosphate + H(+). Its function is as follows. GTP hydrolase that promotes the GTP-dependent binding of aminoacyl-tRNA to the A-site of ribosomes during protein biosynthesis. This is Elongation factor Tu from Rickettsia conorii (strain ATCC VR-613 / Malish 7).